Reading from the N-terminus, the 274-residue chain is Ribosomal RNA small subunit methyltransferase A (274 aa).

Residues histidine 15, leucine 17, glycine 42, glutamate 64, aspartate 89, and asparagine 108 each coordinate S-adenosyl-L-methionine.

It belongs to the class I-like SAM-binding methyltransferase superfamily. rRNA adenine N(6)-methyltransferase family. RsmA subfamily.

The protein resides in the cytoplasm. It carries out the reaction adenosine(1518)/adenosine(1519) in 16S rRNA + 4 S-adenosyl-L-methionine = N(6)-dimethyladenosine(1518)/N(6)-dimethyladenosine(1519) in 16S rRNA + 4 S-adenosyl-L-homocysteine + 4 H(+). Specifically dimethylates two adjacent adenosines (A1518 and A1519) in the loop of a conserved hairpin near the 3'-end of 16S rRNA in the 30S particle. May play a critical role in biogenesis of 30S subunits. The sequence is that of Ribosomal RNA small subunit methyltransferase A from Prochlorococcus marinus (strain MIT 9215).